A 473-amino-acid polypeptide reads, in one-letter code: H(+)/Cl(-) exchange transporter ClcA (473 aa).

Topologically, residues 1 to 32 (MKTDNSTFLAQQIVRLRRRDQIRRLMQRDKTP) are cytoplasmic. A helical membrane pass occupies residues 33-69 (LAILFMAAVVGTLTGLVGVAFEKAVSWVQNMRIGALV). Over 70-76 (QVADHAF) the chain is Periplasmic. The chain crosses the membrane as a helical span at residues 77–100 (LLWPLAFILSALLAMVGYFLVRKF). A Selectivity filter part_1 motif is present at residues 106-110 (GSGIP). Residue Ser107 participates in chloride binding. Positions 109–116 (IPEIEGAL) form an intramembrane region, helical. Topologically, residues 117–123 (EELRPVR) are cytoplasmic. Helical transmembrane passes span 124–141 (WWRVLPVKFIGGMGTLGA) and 148–166 (EGPTVQIGGNLGRMVLDVF). The Selectivity filter part_2 motif lies at 146-150 (GREGP). Residues 167–176 (RMRSAEARHT) lie on the Cytoplasmic side of the membrane. 2 consecutive intramembrane regions (helical) follow at residues 177-189 (LLATGAAAGLSAA) and 193-201 (PLAGILFII). The Cytoplasmic segment spans residues 202 to 214 (EEMRPQFRYNLIS). A helical membrane pass occupies residues 215-232 (IKAVFTGVIMSSIVFRIF). Residues 233 to 252 (NGEAPIIEVGKLSDAPVNTL) lie on the Periplasmic side of the membrane. The helical transmembrane segment at 253 to 281 (WLYLILGIIFGCVGPVFNSLVLRTQDMFQ) threads the bilayer. Over 282-287 (RFHGGE) the chain is Cytoplasmic. The helical transmembrane segment at 288–309 (IKKWVLMGGAIGGLCGILGLIE) threads the bilayer. Topologically, residues 310–329 (PEAAGGGFNLIPIAAAGNFS) are periplasmic. Transmembrane regions (helical) follow at residues 330-349 (VGLLLFIFITRVVTTLLCFS) and 355-376 (GIFAPMLALGTLLGTAFGMAAA). A Selectivity filter part_3 motif is present at residues 355 to 359 (GIFAP). Chloride contacts are provided by Ile356 and Phe357. The Periplasmic portion of the chain corresponds to 377–386 (VLFPQYHLEA). The helical intramembrane region spans 387 to 401 (GTFAIAGMGALMAAS). Positions 402-404 (VRA) form an intramembrane region, note=Loop between two helices. The helical intramembrane region spans 405-416 (PLTGIVLVLEMT). An intramembrane region (note=Loop between two helices) is located at residues 417–421 (DNYQL). A helical membrane pass occupies residues 422 to 438 (ILPMIITCLGATLLAQF). The Cytoplasmic portion of the chain corresponds to 439–473 (LGGKPLYSTILARTLAKQDAEQAAKNQNAPAGENT). Tyr445 is a chloride binding site.

Belongs to the chloride channel (TC 2.A.49) family. ClcA subfamily. As to quaternary structure, homodimer.

It localises to the cell inner membrane. The catalysed reaction is 2 chloride(in) + H(+)(out) = 2 chloride(out) + H(+)(in). Its function is as follows. Proton-coupled chloride transporter. Functions as antiport system and exchanges two chloride ions for 1 proton. Probably acts as an electrical shunt for an outwardly-directed proton pump that is linked to amino acid decarboxylation, as part of the extreme acid resistance (XAR) response. This chain is H(+)/Cl(-) exchange transporter ClcA, found in Salmonella schwarzengrund (strain CVM19633).